The primary structure comprises 302 residues: 4-hydroxy-tetrahydrodipicolinate synthase (302 aa).

Thr-55 serves as a coordination point for pyruvate. Residue Tyr-144 is the Proton donor/acceptor of the active site. Catalysis depends on Lys-172, which acts as the Schiff-base intermediate with substrate. Val-214 serves as a coordination point for pyruvate.

It belongs to the DapA family. Homotetramer; dimer of dimers.

It localises to the cytoplasm. The enzyme catalyses L-aspartate 4-semialdehyde + pyruvate = (2S,4S)-4-hydroxy-2,3,4,5-tetrahydrodipicolinate + H2O + H(+). Its pathway is amino-acid biosynthesis; L-lysine biosynthesis via DAP pathway; (S)-tetrahydrodipicolinate from L-aspartate: step 3/4. Functionally, catalyzes the condensation of (S)-aspartate-beta-semialdehyde [(S)-ASA] and pyruvate to 4-hydroxy-tetrahydrodipicolinate (HTPA). This Prochlorococcus marinus (strain MIT 9313) protein is 4-hydroxy-tetrahydrodipicolinate synthase.